A 1724-amino-acid polypeptide reads, in one-letter code: Protein CHROMATIN REMODELING 5 (1724 aa).

Disordered regions lie at residues 24–88 and 104–415; these read QNAA…QSST and DCQP…DDIE. Polar residues predominate over residues 25-34; sequence NAATFQSSPL. A compositionally biased stretch (basic and acidic residues) spans 126-144; it reads EAYHSEDNHSNDRSEKLDS. Residues 138–164 are a coiled coil; sequence RSEKLDSENENDNENEEEDNEMNKHQS. Composition is skewed to acidic residues over residues 145-157, 170-186, 239-264, and 278-297; these read ENENDNENEEEDN, PADEMLSDEYYEQDEDN, ADMDYEEEEDEDDPEDADFEPYDAAD, and VSDEDPESDEEIDLSDYEDD. The span at 301-313 shows a compositional bias: basic residues; it reads KKPKVRQQSKGFR. A Nuclear localization signal 1 motif is present at residues 320 to 327; sequence ERKSFHVS. Positions 337–350 are enriched in acidic residues; the sequence is QDDDSEEDSENDND. Residues 362–376 are compositionally biased toward polar residues; it reads TLRQNNGRSTNTIGQ. Over residues 403 to 412 the composition is skewed to basic and acidic residues; the sequence is DGKNRKNQKD. A Chromo 1 domain is found at 420-499; it reads DVIEKVLWHQ…FKKVLNYTKK (80 aa). The stretch at 505 to 525 forms a coiled coil; it reads RYRTALSREEIEVNDVSKEMD. Residues 533–597 form the Chromo 2 domain; the sequence is SQVERIIADR…REVSIAVQGK (65 aa). A Helicase ATP-binding domain is found at 637 to 809; sequence VNSWLNDTNV…WALLHFLDPG (173 aa). 650–657 is a binding site for ATP; sequence DEMGLGKT. The DEAH box motif lies at 760 to 763; that stretch reads DEAH. Positions 943–1094 constitute a Helicase C-terminal domain; the sequence is ILDKLLVRLR…HLVIQKLNAE (152 aa). The stretch at 1126 to 1163 forms a coiled coil; the sequence is KEDKNDEESKKRLLSMDIDEILERAEQVEEKHTDETEH. The tract at residues 1199 to 1245 is disordered; the sequence is ALAPRAARNTKSYVDPSHPDRTSKRKKKGSEPPEHTERSQKRRKTEY. 2 short sequence motifs (nuclear localization signal) span residues 1224–1231 and 1348–1355; these read KKKGSEPP and LKRVQGLQ. Positions 1227-1237 are enriched in basic and acidic residues; it reads GSEPPEHTERS. Disordered regions lie at residues 1480 to 1524 and 1654 to 1724; these read QFKA…EMSD and KFKT…FPPR. The span at 1504 to 1520 shows a compositional bias: basic and acidic residues; the sequence is DGPRKTQKAEPLVKEEG. A compositionally biased stretch (polar residues) spans 1658 to 1667; the sequence is AGNSQGSQQV. Basic and acidic residues predominate over residues 1669–1691; the sequence is KGIDTAKFEAWKRRRRTENDVQT. Residues 1692 to 1702 show a composition bias toward polar residues; that stretch reads ERPTITNSNSL.

The protein belongs to the SNF2/RAD54 helicase family.

The protein localises to the nucleus. Its function is as follows. DNA-binding helicase that specifically binds to the promoter of target genes, leading to chromatin remodeling, possibly by promoting deposition of histone H3.3. Probable chromatin remodeling factor. This chain is Protein CHROMATIN REMODELING 5, found in Arabidopsis thaliana (Mouse-ear cress).